The sequence spans 78 residues: Cytochrome c-551 (78 aa).

Residues Cys14, Cys17, His18, and Met55 each coordinate heme c.

Binds 1 heme c group covalently per subunit.

This is Cytochrome c-551 from Halorhodospira halophila (Ectothiorhodospira halophila).